A 189-amino-acid polypeptide reads, in one-letter code: Large ribosomal subunit protein eL18 (189 aa).

The protein belongs to the eukaryotic ribosomal protein eL18 family.

Its subcellular location is the cytoplasm. In Aedes aegypti (Yellowfever mosquito), this protein is Large ribosomal subunit protein eL18 (RpL18).